The chain runs to 941 residues: Peroxisomal ATPase PEX6 (941 aa).

Residues 384-391 (GIPGCGKR) and 698-705 (GPPGTGKT) each bind ATP.

Belongs to the AAA ATPase family. In terms of assembly, interacts with PEX1; forming the PEX1-PEX6 AAA ATPase complex, which is composed of a heterohexamer formed by a trimer of PEX1-PEX6 dimers. Interacts with APME9.

The protein resides in the cytoplasm. Its subcellular location is the cytosol. It is found in the peroxisome membrane. It carries out the reaction ATP + H2O = ADP + phosphate + H(+). Component of the PEX1-PEX6 AAA ATPase complex, a protein dislocase complex that mediates the ATP-dependent extraction of the PEX5 receptor from peroxisomal membranes, an essential step for PEX5 recycling. Specifically recognizes PEX5 monoubiquitinated at 'Cys-11', and pulls it out of the peroxisome lumen through the PEX2-PEX10-PEX12 retrotranslocation channel. Extraction by the PEX1-PEX6 AAA ATPase complex is accompanied by unfolding of the TPR repeats and release of bound cargo from PEX5. Required for jasmonate biosynthesis. Necessary for the developmental elimination of obsolete peroxisome matix proteins. The protein is Peroxisomal ATPase PEX6 of Arabidopsis thaliana (Mouse-ear cress).